The sequence spans 217 residues: Adenylate kinase (217 aa).

10–15 (GAGKGT) is an ATP binding site. Residues 30–59 (STGDMFRAAMKNETELGLKAKSYMDAGELV) form an NMP region. AMP is bound by residues T31, R36, 57–59 (ELV), 85–88 (GFPR), and Q92. The LID stretch occupies residues 126–163 (GRRVSPTSGRTYHVIFNPPKVEGICDVDGSELIQRDDD). ATP-binding positions include R127 and 136 to 137 (TY). R160 and R171 together coordinate AMP. Q199 contacts ATP.

This sequence belongs to the adenylate kinase family. As to quaternary structure, monomer.

It localises to the cytoplasm. The enzyme catalyses AMP + ATP = 2 ADP. The protein operates within purine metabolism; AMP biosynthesis via salvage pathway; AMP from ADP: step 1/1. Catalyzes the reversible transfer of the terminal phosphate group between ATP and AMP. Plays an important role in cellular energy homeostasis and in adenine nucleotide metabolism. This is Adenylate kinase from Halalkalibacterium halodurans (strain ATCC BAA-125 / DSM 18197 / FERM 7344 / JCM 9153 / C-125) (Bacillus halodurans).